A 104-amino-acid chain; its full sequence is Inclusion membrane protein F (104 aa).

Helical transmembrane passes span 39-59 (LVVA…SLVA) and 70-90 (LAVL…VLFI).

The protein localises to the secreted. The protein resides in the host vacuole. It is found in the host pathogen-containing vacuole. It localises to the host pathogen-containing vacuole membrane. Its function is as follows. Inclusion membrane protein probably involved in early modification events of the chlamydial inclusion. The chain is Inclusion membrane protein F (incF) from Chlamydia trachomatis serovar D (strain ATCC VR-885 / DSM 19411 / UW-3/Cx).